The following is an 889-amino-acid chain: DNA mismatch repair protein MutS (889 aa).

620 to 627 (GPNMAGKS) contacts ATP. The disordered stretch occupies residues 812–831 (AAAPSGAARRGRPAREKEPG).

Belongs to the DNA mismatch repair MutS family.

In terms of biological role, this protein is involved in the repair of mismatches in DNA. It is possible that it carries out the mismatch recognition step. This protein has a weak ATPase activity. The chain is DNA mismatch repair protein MutS from Syntrophobacter fumaroxidans (strain DSM 10017 / MPOB).